The chain runs to 494 residues: MSELIKLDAATLADKISSKEVSSAEVTQAFLDQIAATDGDYHAFLHVGAEQALAAAQTVDRAVAAGEHLPSPLAGVPLALKDVFTTTDMPTTCGSKVLEGWTSPYDATVTAKLRSAGIPILGKTNMDEFAMGSSTENSAYGPTRNPWDTERVPGGSGGGSAAALAAFQAPLAIGTDTGGSIRQPAALTATVGVKPTYGTVSRYGLVACASSLDQGGPCARTVLDTALLHQVIAGHDPLDSTSVEAPVPDVVAAARTGAGGDLTGVRIGVVKQLRSGEGYQAGVLASFNAAVDQLTALGAEVTEVDCPHFDYSLPAYYLILPSEVSSNLAKFDGMRYGLRAGDDGTHSAEEVMALTRAAGFGPEVKRRIMIGAYALSAGYYDAYYNQAQKVRTLIARDLDAAYQKVDVLVSPATPTTAFRLGEKVDDPLSMYLFDLCTLPLNLAGHCGMSVPSGLSADDNLPVGLQIMAPALADDRLYRVGAAYEAARGPLPTAL.

Catalysis depends on charge relay system residues lysine 81 and serine 156. Catalysis depends on serine 180, which acts as the Acyl-ester intermediate.

This sequence belongs to the amidase family. GatA subfamily. Heterotrimer of A, B and C subunits.

The catalysed reaction is L-glutamyl-tRNA(Gln) + L-glutamine + ATP + H2O = L-glutaminyl-tRNA(Gln) + L-glutamate + ADP + phosphate + H(+). In terms of biological role, allows the formation of correctly charged Gln-tRNA(Gln) through the transamidation of misacylated Glu-tRNA(Gln) in organisms which lack glutaminyl-tRNA synthetase. The reaction takes place in the presence of glutamine and ATP through an activated gamma-phospho-Glu-tRNA(Gln). In Mycolicibacterium gilvum (strain PYR-GCK) (Mycobacterium gilvum (strain PYR-GCK)), this protein is Glutamyl-tRNA(Gln) amidotransferase subunit A.